The following is a 201-amino-acid chain: LexA repressor (201 aa).

A DNA-binding region (H-T-H motif) is located at residues 29–49; that stretch reads VREICKAVGLSSTSSVHFHLK. Catalysis depends on for autocatalytic cleavage activity residues Ser-125 and Lys-162.

It belongs to the peptidase S24 family. Homodimer.

It catalyses the reaction Hydrolysis of Ala-|-Gly bond in repressor LexA.. Its function is as follows. Represses a number of genes involved in the response to DNA damage (SOS response), including recA and lexA. In the presence of single-stranded DNA, RecA interacts with LexA causing an autocatalytic cleavage which disrupts the DNA-binding part of LexA, leading to derepression of the SOS regulon and eventually DNA repair. In Clostridium botulinum (strain 657 / Type Ba4), this protein is LexA repressor.